The following is a 487-amino-acid chain: Acetyl-coenzyme A carboxylase carboxyl transferase subunit beta, chloroplastic (487 aa).

One can recognise a CoA carboxyltransferase N-terminal domain in the interval 223–487; sequence LWVQCENCYG…LHAFFPLNQN (265 aa). Zn(2+)-binding residues include Cys227, Cys230, Cys246, and Cys249. The C4-type zinc-finger motif lies at 227–249; the sequence is CENCYGLNYKKSFKSKMNLCEQC.

It belongs to the AccD/PCCB family. In terms of assembly, acetyl-CoA carboxylase is a heterohexamer composed of biotin carboxyl carrier protein, biotin carboxylase and 2 subunits each of ACCase subunit alpha and ACCase plastid-coded subunit beta (accD). Zn(2+) serves as cofactor.

It localises to the plastid. The protein localises to the chloroplast stroma. It catalyses the reaction N(6)-carboxybiotinyl-L-lysyl-[protein] + acetyl-CoA = N(6)-biotinyl-L-lysyl-[protein] + malonyl-CoA. The protein operates within lipid metabolism; malonyl-CoA biosynthesis; malonyl-CoA from acetyl-CoA: step 1/1. Its function is as follows. Component of the acetyl coenzyme A carboxylase (ACC) complex. Biotin carboxylase (BC) catalyzes the carboxylation of biotin on its carrier protein (BCCP) and then the CO(2) group is transferred by the transcarboxylase to acetyl-CoA to form malonyl-CoA. This Panax ginseng (Korean ginseng) protein is Acetyl-coenzyme A carboxylase carboxyl transferase subunit beta, chloroplastic.